The chain runs to 321 residues: Probable membrane-associated kinase regulator 3 (321 aa).

Residues 297–314 are compositionally biased toward polar residues; it reads KSNVTESELCSSRTSVST. The segment at 297–321 is disordered; the sequence is KSNVTESELCSSRTSVSTCGDLDKD.

Its subcellular location is the cell membrane. This chain is Probable membrane-associated kinase regulator 3 (MAKR3), found in Arabidopsis thaliana (Mouse-ear cress).